We begin with the raw amino-acid sequence, 133 residues long: Methylglyoxal synthase (133 aa).

The MGS-like domain occupies 1–133 (MPPKPRIALI…ARENGAAQAG (133 aa)). Residues His12, Lys16, 38–41 (TGTT), and 58–59 (SG) each bind substrate. Asp64 functions as the Proton donor/acceptor in the catalytic mechanism. A substrate-binding site is contributed by His91.

The protein belongs to the methylglyoxal synthase family.

It carries out the reaction dihydroxyacetone phosphate = methylglyoxal + phosphate. Functionally, catalyzes the formation of methylglyoxal from dihydroxyacetone phosphate. This Cupriavidus taiwanensis (strain DSM 17343 / BCRC 17206 / CCUG 44338 / CIP 107171 / LMG 19424 / R1) (Ralstonia taiwanensis (strain LMG 19424)) protein is Methylglyoxal synthase.